The chain runs to 269 residues: CCAAT/enhancer-binding protein delta (269 aa).

Disordered regions lie at residues 1–48 (MSAA…PGAA), 97–133 (PLEL…APGS), and 151–219 (AAGQ…NQEM). An N-acetylserine modification is found at Ser2. Composition is skewed to low complexity over residues 36–48 (GAEP…PGAA) and 97–107 (PLELLPGGPAR). Residue Lys120 forms a Glycyl lysine isopeptide (Lys-Gly) (interchain with G-Cter in SUMO) linkage. Residues 155-175 (PTPPTSPEPPRSSPRQTPAPG) are compositionally biased toward pro residues. The span at 177 to 201 (AREKSAGKRGPDRGSPEYRQRRERN) shows a compositional bias: basic and acidic residues. The bZIP domain maps to 191–254 (SPEYRQRRER…AGLRQFFKQL (64 aa)). The basic motif stretch occupies residues 195 to 222 (RQRRERNNIAVRKSRDKAKRRNQEMQQK). A leucine-zipper region spans residues 226 to 254 (LSAENEKLHQRVEQLTRDLAGLRQFFKQL).

This sequence belongs to the bZIP family. C/EBP subfamily. Binds DNA as a homodimer and as a heterodimer. Can form stable heterodimers with CEBPB. Can form stable heterodimers with CEBPA and CEBPE. Directly interacts with SPI1/PU.1; this interaction does not affect DNA-binding properties of each partner. Interacts with PRDM16.

The protein resides in the nucleus. Functionally, transcription activator that recognizes two different DNA motifs: the CCAAT homology common to many promoters and the enhanced core homology common to many enhancers. Important transcription factor regulating the expression of genes involved in immune and inflammatory responses. Transcriptional activator that enhances IL6 transcription alone and as heterodimer with CEBPB. The chain is CCAAT/enhancer-binding protein delta (CEBPD) from Homo sapiens (Human).